The sequence spans 710 residues: Ent-copalyl diphosphate synthase 1 (710 aa).

Lysine 145 contacts substrate. Residues aspartate 277 and aspartate 279 each coordinate Mg(2+). Positions 277 to 280 (DIDD) match the DXDD motif motif. Lysine 364 contributes to the substrate binding site.

It belongs to the terpene synthase family. Tpsc subfamily. Mg(2+) is required as a cofactor. As to expression, expressed in germinating seeds and leaves.

It carries out the reaction (2E,6E,10E)-geranylgeranyl diphosphate = ent-copalyl diphosphate. It functions in the pathway plant hormone biosynthesis; gibberellin biosynthesis. It participates in secondary metabolite biosynthesis; terpenoid biosynthesis. Functionally, involved in the biosynthesis of ent-kaurene diterpenoids natural products such as oridonin, miltiradiene, eriocalyxin B and nezukol, known to exhibit antitumor, anti-inflammatory and antibacterial activities, and in the production of gibberellins phytohormones. Catalyzes the conversion of (2E,6E,10E)-geranylgeranyl diphosphate (GGPP) to ent-copalyl diphosphate (ent-CPP). The polypeptide is Ent-copalyl diphosphate synthase 1 (Isodon eriocalyx (Plectranthus eriocalyx)).